The sequence spans 363 residues: NAD(P)H-quinone oxidoreductase subunit 1, chloroplastic (363 aa).

Helical transmembrane passes span 30 to 50 (FIPIFTPVLGITIGVLVIVWL), 104 to 124 (IAVISILVSYSVVPFGSHLVL), 129 to 149 (IGVFLWIAISSIAPIGLLMSG), 248 to 268 (YSGIKFGLFYVASYLNLLVSS), 269 to 289 (LFVTILYLGGWNISIPYIFVF), 300 to 320 (VFEPTIGMFITLAKTYLFLFI), and 336 to 356 (LLNLGWKFLLPISLGNLLLTT).

This sequence belongs to the complex I subunit 1 family. In terms of assembly, NDH is composed of at least 16 different subunits, 5 of which are encoded in the nucleus.

The protein resides in the plastid. The protein localises to the chloroplast thylakoid membrane. It catalyses the reaction a plastoquinone + NADH + (n+1) H(+)(in) = a plastoquinol + NAD(+) + n H(+)(out). It carries out the reaction a plastoquinone + NADPH + (n+1) H(+)(in) = a plastoquinol + NADP(+) + n H(+)(out). Functionally, NDH shuttles electrons from NAD(P)H:plastoquinone, via FMN and iron-sulfur (Fe-S) centers, to quinones in the photosynthetic chain and possibly in a chloroplast respiratory chain. The immediate electron acceptor for the enzyme in this species is believed to be plastoquinone. Couples the redox reaction to proton translocation, and thus conserves the redox energy in a proton gradient. The sequence is that of NAD(P)H-quinone oxidoreductase subunit 1, chloroplastic from Morus indica (Mulberry).